The primary structure comprises 694 residues: Acetolactate synthase catalytic subunit, mitochondrial (694 aa).

Residues 1–42 (MLRSRQATNALRAVGQTRPLRSQTAVAFTQSLNKVPSNRRSE) constitute a mitochondrion transit peptide. A compositionally biased stretch (low complexity) spans 45–58 (VATASSTASGAFNS). Positions 45 to 69 (VATASSTASGAFNSQVRPTPSPTFN) are disordered. Residues 59–69 (QVRPTPSPTFN) show a composition bias toward polar residues. Residue Glu140 coordinates thiamine diphosphate. FAD-binding positions include Arg242, 358-379 (HGSA…LGGR), and 410-429 (EIMP…IVGD). The thiamine pyrophosphate binding stretch occupies residues 505 to 585 (QHQMWTAQHF…VKVIVLNNEE (81 aa)). Mg(2+)-binding residues include Asp556, Asn583, and Glu585.

The protein belongs to the TPP enzyme family. As to quaternary structure, homodimer. Mg(2+) is required as a cofactor. Requires thiamine diphosphate as cofactor.

The protein localises to the mitochondrion. The enzyme catalyses 2 pyruvate + H(+) = (2S)-2-acetolactate + CO2. It carries out the reaction 2-oxobutanoate + pyruvate + H(+) = (S)-2-ethyl-2-hydroxy-3-oxobutanoate + CO2. It functions in the pathway amino-acid biosynthesis; L-isoleucine biosynthesis; L-isoleucine from 2-oxobutanoate: step 1/4. It participates in amino-acid biosynthesis; L-valine biosynthesis; L-valine from pyruvate: step 1/4. Acetolactate synthase catalytic subunit, mitochondrial; part of the gene cluster that mediates the biosynthesis of chlorflavonin, a fungal flavonoid with acetolactate synthase inhibitory activity. Is not direcly involved in chlorflavonin biosynthesis but acts as a self-resistant protein that effectively confers chlorflavonin resistance to the native host. As a catalytic subunit of mitochondrial acetolactate synthase, catalyzes the first of a series of common steps in the biosynthesis of the branched-chain amino acids. Catalyzes the irreversible decarboxylation of pyruvate to a bound hydroxyethyl group that then condenses with either a second pyruvate molecule to form 2-acetolactate (AL) or with 2-ketobutyrate to form 2-aceto-2-hydroxybutyrate (AHB). The first product is the precursor for valine and leucine biosynthesis, while the second leads to isoleucine. The sequence is that of Acetolactate synthase catalytic subunit, mitochondrial from Aspergillus candidus.